The chain runs to 194 residues: Imidazoleglycerol-phosphate dehydratase (194 aa).

Belongs to the imidazoleglycerol-phosphate dehydratase family.

The protein resides in the cytoplasm. The enzyme catalyses D-erythro-1-(imidazol-4-yl)glycerol 3-phosphate = 3-(imidazol-4-yl)-2-oxopropyl phosphate + H2O. It participates in amino-acid biosynthesis; L-histidine biosynthesis; L-histidine from 5-phospho-alpha-D-ribose 1-diphosphate: step 6/9. The chain is Imidazoleglycerol-phosphate dehydratase from Streptococcus thermophilus (strain ATCC BAA-491 / LMD-9).